The sequence spans 283 residues: uncharacterized protein (283 aa).

Transmembrane regions (helical) follow at residues 18–38 (VYDIIVVIVVMALATIIAKLI), 61–81 (VIYFGIIIVAFIAVLPALGLD), and 94–114 (IVLGFASQSVVANLVSGIFLI).

The protein belongs to the MscS (TC 1.A.23) family.

It localises to the cell membrane. This is an uncharacterized protein from Archaeoglobus fulgidus (strain ATCC 49558 / DSM 4304 / JCM 9628 / NBRC 100126 / VC-16).